A 669-amino-acid polypeptide reads, in one-letter code: Sodium-dependent phosphate transporter (669 aa).

Residues 1 to 6 (MVTGPD) are Extracellular-facing. The chain crosses the membrane as a helical span at residues 7–27 (MLWLVITSGIACFFMAFVTGA). Residues 28–47 (NDIANTFSTSIGSKAISIKK) are Cytoplasmic-facing. The chain crosses the membrane as a helical span at residues 48–68 (ALIVAFFFEALGASLLGGTVT). The Extracellular segment spans residues 69–86 (DSIRSKIINFQVFYDTPE). The helical transmembrane segment at 87–107 (FLMLGMCCALMGATVWLAVAT) threads the bilayer. A topological domain (cytoplasmic) is located at residue R108. A helical membrane pass occupies residues 109–129 (AGLPVSTTHSIIGALLGFGLA). Over 130–143 (TGNMKSIKWEKINN) the chain is Extracellular. A helical membrane pass occupies residues 144–164 (IVISWLAAPILAGTCSAIAFT). Residues 165 to 186 (VLRMLILRKKNSFEIIKKMYWF) lie on the Cytoplasmic side of the membrane. Residues 187–207 (LIFLITLPFSVFLIFHNPIVI) traverse the membrane as a helical segment. The Extracellular segment spans residues 208-239 (NTQCKMKKDGKVIVSSPCYIEDWSAAHSFYAS). Residues 240-260 (IICILLSSLLTAIGSFVIYII) traverse the membrane as a helical segment. Topologically, residues 261 to 502 (YNKRINNYNL…YNNGIRGKIK (242 aa)) are cytoplasmic. A compositionally biased stretch (polar residues) spans 311-335 (AHNNTSNGTKQNQVGNGTKSNNNNV). Disordered regions lie at residues 311-364 (AHNN…SVEA) and 392-444 (TNMN…KNME). A compositionally biased stretch (basic and acidic residues) spans 342–352 (KNVKSQQDDSK). A compositionally biased stretch (low complexity) spans 395–433 (NENNNNSNKNNNSNKNNNSNKNNNSNKNNNSNNGNSNEG). The helical transmembrane segment at 503-523 (VQWYILLFGGLSMSLGLSIMG) threads the bilayer. At 524–542 (YRVIKTVGMKLIKITPARG) the chain is on the extracellular side. The chain crosses the membrane as a helical span at residues 543–563 (FTIELISGLVVLFFSICGIPL). Over 564-632 (SSTHCAVSSV…TSCVNLRLFR (69 aa)) the chain is Cytoplasmic. A helical transmembrane segment spans residues 633–653 (TVFLSWILTVVFSATVTAGIY). Residues 654-669 (SFAAYSPSYIMKMQTV) lie on the Extracellular side of the membrane.

It belongs to the inorganic phosphate transporter (PiT) (TC 2.A.20) family.

The protein resides in the cell membrane. It catalyses the reaction 2 Na(+)(out) + phosphate(out) = 2 Na(+)(in) + phosphate(in). Sodium-phosphate symporter which preferentially transports the monovalent form of phosphate with a stoichiometry of two sodium ions per phosphate ion. In Plasmodium falciparum, this protein is Sodium-dependent phosphate transporter.